Consider the following 294-residue polypeptide: Tryptophan 2,3-dioxygenase 1 (294 aa).

The tract at residues 1–20 is disordered; sequence MSEPIQPTRPAASGCPMHGA. Substrate is bound by residues 63–67, Tyr-125, and Arg-129; that span reads FIVQH. His-252 serves as a coordination point for heme. Thr-266 lines the substrate pocket.

It belongs to the tryptophan 2,3-dioxygenase family. As to quaternary structure, homotetramer. Requires heme as cofactor.

The catalysed reaction is L-tryptophan + O2 = N-formyl-L-kynurenine. It participates in amino-acid degradation; L-tryptophan degradation via kynurenine pathway; L-kynurenine from L-tryptophan: step 1/2. Its function is as follows. Heme-dependent dioxygenase that catalyzes the oxidative cleavage of the L-tryptophan (L-Trp) pyrrole ring and converts L-tryptophan to N-formyl-L-kynurenine. Catalyzes the oxidative cleavage of the indole moiety. This chain is Tryptophan 2,3-dioxygenase 1, found in Ralstonia nicotianae (strain ATCC BAA-1114 / GMI1000) (Ralstonia solanacearum).